Here is a 496-residue protein sequence, read N- to C-terminus: Autophagy-related protein 21 (496 aa).

The stretch at Met-1–Glu-35 is one WD 1 repeat. The segment at Ser-41–Ala-86 is disordered. The segment covering Ser-46 to Ser-57 has biased composition (low complexity). The segment covering Asp-75–Asp-84 has biased composition (acidic residues). A WD 2 repeat occupies Val-148 to Asn-190. Position 213 is a phosphothreonine (Thr-213). Phosphoserine is present on Ser-237. WD repeat units lie at residues Val-294–Ser-334, Thr-346–Pro-385, and Val-448–Val-488. The L/FRRG motif motif lies at Phe-342 to Thr-346.

It belongs to the WD repeat PROPPIN family.

The protein resides in the cytoplasm. It localises to the vacuole membrane. Functionally, required for cytoplasm to vacuole transport (Cvt) vesicles formation and mitophagy. Involved in binding of phosphatidylethanolamine to ATG8 and in recruitment of ATG8 and ATG5 to the pre-autophagosomal structure. Protects ATG8 from ARG4-mediated cleavage. Essential for maturation of proaminopeptidase I. This chain is Autophagy-related protein 21 (ATG21), found in Saccharomyces cerevisiae (strain YJM789) (Baker's yeast).